Here is a 280-residue protein sequence, read N- to C-terminus: Maltodextrin transport system permease protein MalD (280 aa).

Helical transmembrane passes span 15–35 (LTYL…LITI), 77–97 (LIIA…AGYA), 110–130 (LVFF…AFFV), 142–162 (WFLI…LMKG), 200–220 (VQAL…SFLL), and 244–264 (IAYF…LFFF). Positions 73-265 (YLNTLIIALI…LPICILFFFL (193 aa)) constitute an ABC transmembrane type-1 domain.

This sequence belongs to the binding-protein-dependent transport system permease family. MalFG subfamily.

It localises to the cell membrane. Its function is as follows. Part of the binding-protein-dependent transport system for maltodextrin; probably responsible for the translocation of the substrate across the membrane. The protein is Maltodextrin transport system permease protein MalD (malD) of Streptococcus pneumoniae (strain ATCC BAA-255 / R6).